The primary structure comprises 209 residues: Imidazole glycerol phosphate synthase subunit HisH (209 aa).

Positions 1–205 (MIAIIDYGMG…KGVVETWKSS (205 aa)) constitute a Glutamine amidotransferase type-1 domain. Cysteine 79 serves as the catalytic Nucleophile. Catalysis depends on residues histidine 180 and glutamate 182.

As to quaternary structure, heterodimer of HisH and HisF.

It localises to the cytoplasm. The catalysed reaction is 5-[(5-phospho-1-deoxy-D-ribulos-1-ylimino)methylamino]-1-(5-phospho-beta-D-ribosyl)imidazole-4-carboxamide + L-glutamine = D-erythro-1-(imidazol-4-yl)glycerol 3-phosphate + 5-amino-1-(5-phospho-beta-D-ribosyl)imidazole-4-carboxamide + L-glutamate + H(+). It carries out the reaction L-glutamine + H2O = L-glutamate + NH4(+). It functions in the pathway amino-acid biosynthesis; L-histidine biosynthesis; L-histidine from 5-phospho-alpha-D-ribose 1-diphosphate: step 5/9. IGPS catalyzes the conversion of PRFAR and glutamine to IGP, AICAR and glutamate. The HisH subunit catalyzes the hydrolysis of glutamine to glutamate and ammonia as part of the synthesis of IGP and AICAR. The resulting ammonia molecule is channeled to the active site of HisF. This chain is Imidazole glycerol phosphate synthase subunit HisH, found in Bacillus thuringiensis subsp. konkukian (strain 97-27).